A 426-amino-acid chain; its full sequence is Pyrophosphate--fructose 6-phosphate 1-phosphotransferase 1 (426 aa).

G15 serves as a coordination point for diphosphate. Residue D114 coordinates Mg(2+). Substrate is bound by residues 140 to 142 (TID), 186 to 188 (MGR), E247, and 308 to 311 (YELR). D142 (proton acceptor) is an active-site residue.

The protein belongs to the phosphofructokinase type A (PFKA) family. PPi-dependent PFK group II subfamily. Clade 'Short' sub-subfamily. In terms of assembly, homotetramer. It depends on Mg(2+) as a cofactor.

It is found in the cytoplasm. The enzyme catalyses beta-D-fructose 6-phosphate + diphosphate = beta-D-fructose 1,6-bisphosphate + phosphate + H(+). It functions in the pathway carbohydrate degradation; glycolysis; D-glyceraldehyde 3-phosphate and glycerone phosphate from D-glucose: step 3/4. Its activity is regulated as follows. Non-allosteric. Functionally, catalyzes the phosphorylation of D-fructose 6-phosphate, the first committing step of glycolysis. Uses inorganic phosphate (PPi) as phosphoryl donor instead of ATP like common ATP-dependent phosphofructokinases (ATP-PFKs), which renders the reaction reversible, and can thus function both in glycolysis and gluconeogenesis. Consistently, PPi-PFK can replace the enzymes of both the forward (ATP-PFK) and reverse (fructose-bisphosphatase (FBPase)) reactions. The protein is Pyrophosphate--fructose 6-phosphate 1-phosphotransferase 1 (Pfk1) of Trichomonas vaginalis (strain ATCC PRA-98 / G3).